The primary structure comprises 319 residues: 33 kDa chaperonin (319 aa).

Positions 1–10 (MTDASGSERL) are enriched in basic and acidic residues. The segment at 1–25 (MTDASGSERLKRAKGISEGTPSSLP) is disordered. 2 cysteine pairs are disulfide-bonded: cysteine 261–cysteine 263 and cysteine 294–cysteine 297.

This sequence belongs to the HSP33 family. In terms of processing, under oxidizing conditions two disulfide bonds are formed involving the reactive cysteines. Under reducing conditions zinc is bound to the reactive cysteines and the protein is inactive.

Its subcellular location is the cytoplasm. Redox regulated molecular chaperone. Protects both thermally unfolding and oxidatively damaged proteins from irreversible aggregation. Plays an important role in the bacterial defense system toward oxidative stress. The protein is 33 kDa chaperonin of Synechococcus sp. (strain JA-2-3B'a(2-13)) (Cyanobacteria bacterium Yellowstone B-Prime).